Consider the following 141-residue polypeptide: Hemoglobin subunit alpha (141 aa).

The 141-residue stretch at 1–141 (VLSGEDKNNI…VSTVLTSKYR (141 aa)) folds into the Globin domain. Ser3 is subject to Phosphoserine. 2 positions are modified to N6-succinyllysine: Lys7 and Lys11. At Lys16 the chain carries N6-acetyllysine; alternate. The residue at position 16 (Lys16) is an N6-succinyllysine; alternate. Position 24 is a phosphotyrosine (Tyr24). The residue at position 40 (Lys40) is an N6-succinyllysine. Ser49 is modified (phosphoserine). His58 is an O2 binding site. His87 contacts heme b. At Ser102 the chain carries Phosphoserine. Thr108 bears the Phosphothreonine mark. Phosphoserine is present on residues Ser124 and Ser131. Phosphothreonine occurs at positions 134 and 137. Phosphoserine is present on Ser138.

Belongs to the globin family. As to quaternary structure, heterotetramer of two alpha chains and two beta chains. Red blood cells.

Functionally, involved in oxygen transport from the lung to the various peripheral tissues. Its function is as follows. Hemopressin acts as an antagonist peptide of the cannabinoid receptor CNR1. Hemopressin-binding efficiently blocks cannabinoid receptor CNR1 and subsequent signaling. The sequence is that of Hemoglobin subunit alpha (HBA) from Ondatra zibethicus (Muskrat).